The primary structure comprises 119 residues: Protein phosphatase EYA3 (119 aa).

The protein belongs to the HAD-like hydrolase superfamily. EYA family. The cofactor is Mg(2+).

It localises to the cytoplasm. It is found in the nucleus. It carries out the reaction O-phospho-L-tyrosyl-[protein] + H2O = L-tyrosyl-[protein] + phosphate. Its function is as follows. Tyrosine phosphatase that specifically dephosphorylates 'Tyr-142' of histone H2AX (H2AXY142ph). 'Tyr-142' phosphorylation of histone H2AX plays a central role in DNA repair and acts as a mark that distinguishes between apoptotic and repair responses to genotoxic stress. Promotes efficient DNA repair by dephosphorylating H2AX, promoting the recruitment of DNA repair complexes containing MDC1. Its function as histone phosphatase probably explains its role in transcription regulation during organogenesis. May be involved in development of the eye. This Gallus gallus (Chicken) protein is Protein phosphatase EYA3 (EYA3).